A 445-amino-acid chain; its full sequence is uncharacterized protein (445 aa).

This is an uncharacterized protein from Xanthomonas euvesicatoria.